The primary structure comprises 428 residues: Histone deacetylase 3 (428 aa).

The tract at residues 3 to 316 (KTVAYFYDPD…WTYETSLLVD (314 aa)) is histone deacetylase. 1D-myo-inositol 1,4,5,6-tetrakisphosphate contacts are provided by histidine 17, glycine 21, and lysine 25. Residue histidine 135 is part of the active site. Residues aspartate 170, histidine 172, and aspartate 259 each contribute to the Zn(2+) site. Position 265 (arginine 265) interacts with 1D-myo-inositol 1,4,5,6-tetrakisphosphate. The disordered stretch occupies residues 385 to 428 (LSYDRTDEPDPEERGSEENYSRPEAANEFYDGDHDNDKESDVEI). 2 stretches are compositionally biased toward basic and acidic residues: residues 386-405 (SYDR…ENYS) and 415-428 (DGDH…DVEI).

The protein belongs to the histone deacetylase family. HD type 1 subfamily.

It is found in the nucleus. The protein resides in the chromosome. The protein localises to the cytoplasm. Its subcellular location is the cytosol. The catalysed reaction is N(6)-acetyl-L-lysyl-[histone] + H2O = L-lysyl-[histone] + acetate. The enzyme catalyses N(6)-acetyl-L-lysyl-[protein] + H2O = L-lysyl-[protein] + acetate. It carries out the reaction N(6)-(2E)-butenoyl-L-lysyl-[protein] + H2O = (2E)-2-butenoate + L-lysyl-[protein]. It catalyses the reaction N(6)-(2-hydroxyisobutanoyl)-L-lysyl-[protein] + H2O = 2-hydroxy-2-methylpropanoate + L-lysyl-[protein]. The catalysed reaction is N(6)-[(S)-lactoyl]-L-lysyl-[protein] + H2O = (S)-lactate + L-lysyl-[protein]. Inositol tetraphosphate (1D-myo-inositol 1,4,5,6-tetrakisphosphate) promotes the histone deacetylase activity by acting as an intermolecular glue between HDAC3 and N-Cor repressor complex components. In terms of biological role, histone deacetylase that catalyzes the deacetylation of lysine residues on the N-terminal part of the core histones (H2A, H2B, H3 and H4), and some other non-histone substrates. Histone deacetylation gives a tag for epigenetic repression and plays an important role in transcriptional regulation, cell cycle progression and developmental events. Histone deacetylases act via the formation of large multiprotein complexes, such as N-Cor repressor complex, which activate the histone deacetylase activity. Participates in the BCL6 transcriptional repressor activity by deacetylating the H3 'Lys-27' (H3K27) on enhancer elements, antagonizing EP300 acetyltransferase activity and repressing proximal gene expression. Also functions as a deacetylase for non-histone targets. In addition to protein deacetylase activity, also acts as a protein-lysine deacylase by recognizing other acyl groups: catalyzes removal of (2E)-butenoyl (crotonyl), lactoyl (lactyl) and 2-hydroxyisobutanoyl (2-hydroxyisobutyryl) acyl groups from lysine residues, leading to protein decrotonylation, delactylation and de-2-hydroxyisobutyrylation, respectively. This chain is Histone deacetylase 3 (HDAC3), found in Gallus gallus (Chicken).